The chain runs to 1038 residues: Pro-apoptotic serine protease nma111 (1038 aa).

The interval 1–47 (MDLNGDSNAKRKRSSISAAAERPAKHLRPENSSLTPGDTTPANGTVY) is disordered. A compositionally biased stretch (polar residues) spans 30 to 43 (ENSSLTPGDTTPAN). A serine protease region spans residues 82-275 (VVSIHFCQTC…DRPLRALNCI (194 aa)). Residues His120, Asp151, and Ser233 each act as charge relay system in the active site. PDZ domains lie at 289–374 (QWIL…LLVQ) and 877–958 (VFCG…VTFD).

Belongs to the peptidase S1C family.

The protein resides in the nucleus. Nuclear serine protease which mediates apoptosis. The protein is Pro-apoptotic serine protease nma111 (nma111) of Aspergillus terreus (strain NIH 2624 / FGSC A1156).